The following is a 641-amino-acid chain: Kelch-like protein 22 (641 aa).

Positions 1 to 25 are disordered; sequence MAEDLETMKPSQAPQQPSLPQGSSK. The span at 10–24 shows a compositional bias: low complexity; it reads PSQAPQQPSLPQGSS. The BTB domain maps to 50-117; that stretch reads FDVVLKVEGK…IYTSDLALSV (68 aa). 6 Kelch repeats span residues 299-349, 350-399, 400-446, 448-493, 494-544, and 545-593; these read CVVG…VLNN, FVYL…VLGD, FLYA…ALDG, MYVA…ALQE, KIYL…VLAK, and KIFV…VLTL.

In terms of assembly, component of the BCR(KLHL22) E3 ubiquitin ligase complex, at least composed of cul3, klhl22 and rbx1.

Its subcellular location is the cytoplasm. It is found in the cytosol. The protein resides in the cytoskeleton. It localises to the microtubule organizing center. The protein localises to the centrosome. Its subcellular location is the spindle. It is found in the nucleus. The protein resides in the lysosome. The protein operates within protein modification; protein ubiquitination. Functionally, substrate-specific adapter of a BCR (BTB-CUL3-RBX1) E3 ubiquitin ligase complex. The BCR(KLHL22) ubiquitin ligase complex could mediate the monoubiquitination of PLK1 and regulate its activity in spindle assembly checkpoint (SAC) and chromosome segregation. The BCR(KLHL22) ubiquitin ligase complex may also be responsible for the ubiquitin-dependent proteasomal degradation of DEPDC5 and the activation of the TORC1 pathway. The chain is Kelch-like protein 22 (klhl22) from Xenopus tropicalis (Western clawed frog).